Reading from the N-terminus, the 277-residue chain is Probable cyclic nucleotide phosphodiesterase MCR_0369 (277 aa).

Fe cation-binding residues include aspartate 17, histidine 19, aspartate 53, asparagine 83, histidine 165, histidine 204, and histidine 206. AMP contacts are provided by residues histidine 19, aspartate 53, and 83 to 84; that span reads NH. Histidine 206 contacts AMP.

This sequence belongs to the cyclic nucleotide phosphodiesterase class-III family. Requires Fe(2+) as cofactor.

The chain is Probable cyclic nucleotide phosphodiesterase MCR_0369 from Moraxella catarrhalis (strain BBH18).